The following is a 666-amino-acid chain: Asperfuranone cluster transcription factor afoA (666 aa).

A DNA-binding region (zn(2)-C6 fungal-type) is located at residues 16–43; it reads CEECRRRKARCDRVRPKCGFCTENELQC. 2 disordered regions span residues 184–206 and 347–373; these read LSFD…STTR and AGSD…GENA. Positions 353–369 are enriched in low complexity; that stretch reads LSPPSSSPPSSLTLSPS.

The protein localises to the nucleus. In terms of biological role, transcription factor that regulates the expression of the gene cluster that mediates the biosynthesis of asperfuranone, a probable antitumor agent. The sequence is that of Asperfuranone cluster transcription factor afoA from Emericella nidulans (strain FGSC A4 / ATCC 38163 / CBS 112.46 / NRRL 194 / M139) (Aspergillus nidulans).